The following is a 207-amino-acid chain: Outer-membrane lipoprotein LolB (207 aa).

The N-terminal stretch at 1-21 (MPQRKISFYRLLPLATLLLAA) is a signal peptide. Residue Cys22 is the site of N-palmitoyl cysteine attachment. The S-diacylglycerol cysteine moiety is linked to residue Cys22.

The protein belongs to the LolB family. In terms of assembly, monomer.

Its subcellular location is the cell outer membrane. In terms of biological role, plays a critical role in the incorporation of lipoproteins in the outer membrane after they are released by the LolA protein. The polypeptide is Outer-membrane lipoprotein LolB (Yersinia enterocolitica serotype O:8 / biotype 1B (strain NCTC 13174 / 8081)).